Consider the following 397-residue polypeptide: FAD-dependent monooxygenase trt8 (397 aa).

Tyr53 is a catalytic residue. FAD-binding residues include Asp145 and Ala158.

This sequence belongs to the paxM FAD-dependent monooxygenase family. Requires FAD as cofactor.

It participates in secondary metabolite biosynthesis; terpenoid biosynthesis. FAD-dependent monooxygenase; part of the gene cluster that mediates the biosynthesis of terretonin, a fungal meroterpenoid that acts as a mycotoxin. The first step of the pathway is the synthesis of 3,5-dimethylorsellinic acid (DMOA) by the polyketide synthase trt4. DMOA is then prenylated into farnesyl-DMOA by the polyprenyl transferase trt2. Methylation by the methyltransferase trt5 then leads to farnesyl-DMOA methyl ester which is further subject to epoxidation by the FAD-dependent monooxygenase trt8 to yield epoxyfarnesyl-DMOA methyl ester. Cyclization of epoxyfarnesyl-DMOA methyl ester by the terpene cyclase trt1 leads to a tetracycle intermediate which is in turn converted to preterretonin. Dehydrogenase trt9 comes next to transform preterretonin to preterrenoid. The FAD-dependent monooxygenase trt3 is then required for the C-hydroxylation at C16 of preterrenoid to yield terrenoid. The cytochrome P450 trt6 catalyzes three successive oxidations to transform terrenoid into an unstable intermediate, which then undergoes the D-ring expansion and unusual rearrangement of the methoxy group to afford the core skeleton of terretonin. Trt14 catalyzes the D-ring expansion of terretonin involving intramolecular methoxy rearrangement as well as the hydrolysis of the expanded D-ring and the methyl ester moiety. Finally, the nonheme iron-dependent dioxygenase trt7 accomplishes the last two oxidation reactions steps to complete the biosynthesis of terretonin. Terretonin C is produced via spontaneous decarboxylation of the terretonin precursor. Another shunt product of the terretonin biosynthesis is dihydrofarnesyl-DMOA, derived from epoxyfarnesyl-DMOA through hydrolysis of the epoxide. The chain is FAD-dependent monooxygenase trt8 from Aspergillus terreus (strain NIH 2624 / FGSC A1156).